We begin with the raw amino-acid sequence, 217 residues long: Translation initiation factor IF-3 (217 aa).

Positions 185-217 are disordered; that stretch reads YNLPETETTRIREENREKQKEKENTSKEGNKDA. Residues 191–217 show a composition bias toward basic and acidic residues; the sequence is ETTRIREENREKQKEKENTSKEGNKDA.

The protein belongs to the IF-3 family. As to quaternary structure, monomer.

Its subcellular location is the cytoplasm. Its function is as follows. IF-3 binds to the 30S ribosomal subunit and shifts the equilibrium between 70S ribosomes and their 50S and 30S subunits in favor of the free subunits, thus enhancing the availability of 30S subunits on which protein synthesis initiation begins. The sequence is that of Translation initiation factor IF-3 from Methylacidiphilum infernorum (isolate V4) (Methylokorus infernorum (strain V4)).